The chain runs to 208 residues: Riboflavin synthase (208 aa).

2 Lumazine-binding repeats span residues 1 to 97 and 98 to 195; these read MFTG…MGGH and FVQG…EKLV. 2,4-dihydroxypteridine-binding positions include 4-6, 48-50, 62-67, 101-103, K137, 146-148, and 160-165; these read GLV, CLT, GIAPES, GHV, SLT, and MMISYT.

As to quaternary structure, homotrimer.

It carries out the reaction 2 6,7-dimethyl-8-(1-D-ribityl)lumazine + H(+) = 5-amino-6-(D-ribitylamino)uracil + riboflavin. The protein operates within cofactor biosynthesis; riboflavin biosynthesis; riboflavin from 2-hydroxy-3-oxobutyl phosphate and 5-amino-6-(D-ribitylamino)uracil: step 2/2. Functionally, catalyzes the dismutation of two molecules of 6,7-dimethyl-8-ribityllumazine, resulting in the formation of riboflavin and 5-amino-6-(D-ribitylamino)uracil. The protein is Riboflavin synthase (rib5) of Schizosaccharomyces pombe (strain 972 / ATCC 24843) (Fission yeast).